The chain runs to 561 residues: Probable galacturonosyltransferase 9 (561 aa).

Residues 1-27 lie on the Cytoplasmic side of the membrane; the sequence is MAVAFRGGRGGVGSGQSTGLRSFFSYR. Residues 28 to 48 traverse the membrane as a helical; Signal-anchor for type II membrane protein segment; it reads IFISALFSFLFLATFSVVLNS. Residues 49–561 are Lumenal-facing; the sequence is SRHQPHQDHT…EFVQMCNFGL (513 aa). N-linked (GlcNAc...) asparagine glycosylation is found at asparagine 124, asparagine 320, asparagine 346, and asparagine 426.

This sequence belongs to the glycosyltransferase 8 family. As to expression, expressed in roots, inflorescences, siliques, leaves and stems.

It localises to the golgi apparatus membrane. Its pathway is glycan metabolism; pectin biosynthesis. Its function is as follows. May be involved in pectin synthesis. In Arabidopsis thaliana (Mouse-ear cress), this protein is Probable galacturonosyltransferase 9 (GAUT9).